A 268-amino-acid polypeptide reads, in one-letter code: Phosphate import ATP-binding protein PstB 2 (268 aa).

Positions 19–263 constitute an ABC transporter domain; that stretch reads YKVRNMAFFY…PKDKRTEDYI (245 aa). Residue 51–58 participates in ATP binding; the sequence is GPSGCGKS.

This sequence belongs to the ABC transporter superfamily. Phosphate importer (TC 3.A.1.7) family. In terms of assembly, the complex is composed of two ATP-binding proteins (PstB), two transmembrane proteins (PstC and PstA) and a solute-binding protein (PstS).

It localises to the cell inner membrane. The catalysed reaction is phosphate(out) + ATP + H2O = ADP + 2 phosphate(in) + H(+). Part of the ABC transporter complex PstSACB involved in phosphate import. Responsible for energy coupling to the transport system. This chain is Phosphate import ATP-binding protein PstB 2, found in Gloeobacter violaceus (strain ATCC 29082 / PCC 7421).